The following is a 294-amino-acid chain: Cytidine deaminase (294 aa).

2 consecutive CMP/dCMP-type deaminase domains span residues aspartate 48 to lysine 168 and leucine 186 to glycine 294. Asparagine 89 to glutamate 91 is a substrate binding site. Zn(2+) is bound at residue histidine 102. Glutamate 104 acts as the Proton donor in catalysis. Residues cysteine 129 and cysteine 132 each coordinate Zn(2+).

The protein belongs to the cytidine and deoxycytidylate deaminase family. Homodimer. Requires Zn(2+) as cofactor.

It catalyses the reaction cytidine + H2O + H(+) = uridine + NH4(+). The catalysed reaction is 2'-deoxycytidine + H2O + H(+) = 2'-deoxyuridine + NH4(+). This enzyme scavenges exogenous and endogenous cytidine and 2'-deoxycytidine for UMP synthesis. The sequence is that of Cytidine deaminase from Salmonella typhi.